Consider the following 363-residue polypeptide: NAD(P)H-quinone oxidoreductase subunit 1, chloroplastic (363 aa).

The next 9 membrane-spanning stretches (helical) occupy residues 30-50 (LVPI…IVWL), 98-118 (FSIG…VIPF), 129-149 (IGVF…LMSG), 165-185 (AAQS…ISLL), 203-223 (LWGW…ISSL), 248-268 (YSGI…LVSS), 269-289 (LFVT…IFVP), 300-320 (VFGT…FLFI), and 334-354 (DQLL…NLLL).

The protein belongs to the complex I subunit 1 family. NDH is composed of at least 16 different subunits, 5 of which are encoded in the nucleus.

Its subcellular location is the plastid. The protein localises to the chloroplast thylakoid membrane. It catalyses the reaction a plastoquinone + NADH + (n+1) H(+)(in) = a plastoquinol + NAD(+) + n H(+)(out). It carries out the reaction a plastoquinone + NADPH + (n+1) H(+)(in) = a plastoquinol + NADP(+) + n H(+)(out). In terms of biological role, NDH shuttles electrons from NAD(P)H:plastoquinone, via FMN and iron-sulfur (Fe-S) centers, to quinones in the photosynthetic chain and possibly in a chloroplast respiratory chain. The immediate electron acceptor for the enzyme in this species is believed to be plastoquinone. Couples the redox reaction to proton translocation, and thus conserves the redox energy in a proton gradient. This is NAD(P)H-quinone oxidoreductase subunit 1, chloroplastic from Oenothera elata subsp. hookeri (Hooker's evening primrose).